A 204-amino-acid chain; its full sequence is Rho GDP-dissociation inhibitor 1 (204 aa).

A disordered region spans residues 1–36 (MAEQEPTAEQLAQIAAENEEDEHSVNYKPPAQKSIQ). N-acetylalanine is present on alanine 2. Residue serine 34 is modified to Phosphoserine. The residue at position 43 (lysine 43) is an N6-acetyllysine. A Phosphoserine modification is found at serine 47. N6-acetyllysine occurs at positions 105 and 127. Glycyl lysine isopeptide (Lys-Gly) (interchain with G-Cter in SUMO1); alternate cross-links involve residues lysine 138 and lysine 141. Residues lysine 138 and lysine 141 each participate in a glycyl lysine isopeptide (Lys-Gly) (interchain with G-Cter in SUMO2); alternate cross-link. An N6-acetyllysine; alternate modification is found at lysine 141. Lysine 141 carries the N6-succinyllysine; alternate modification. An N6-acetyllysine modification is found at lysine 178.

This sequence belongs to the Rho GDI family. Monomer. Interacts with FER. Interacts with PLXNB3. Forms a heterodimer with RAC1. Interacts with RHOA, the affinity is increased by three orders of magnitude when RHOA is prenylated. Interacts with PSMD10; the interaction increases ARHGDIA association with RHOA, leading to ARHGDIA-mediated inactivation of RHOA and ROCK and prolonged AKT activation. Interacts with KANK2; the interaction is direct and may regulate the interaction of ARHGDIA with RHOA, RAC1 and CDC42. Interacts with RHOC. Interacts with CDC42. Interacts with NGFR (via death domain); NGFR binding decreases the affinity for RHOA. As to expression, in kidney glomerulus, expressed in podocytes and mesangial cells.

It is found in the cytoplasm. Its function is as follows. Controls Rho proteins homeostasis. Regulates the GDP/GTP exchange reaction of the Rho proteins by inhibiting the dissociation of GDP from them, and the subsequent binding of GTP to them. Retains Rho proteins such as CDC42, RAC1 and RHOA in an inactive cytosolic pool, regulating their stability and protecting them from degradation. Actively involved in the recycling and distribution of activated Rho GTPases in the cell, mediates extraction from membranes of both inactive and activated molecules due its exceptionally high affinity for prenylated forms. Through the modulation of Rho proteins, may play a role in cell motility regulation. In glioma cells, inhibits cell migration and invasion by mediating the signals of SEMA5A and PLXNB3 that lead to inactivation of RAC1. This Mus musculus (Mouse) protein is Rho GDP-dissociation inhibitor 1 (Arhgdia).